The following is a 901-amino-acid chain: ABC transporter A family member 8 (901 aa).

7 helical membrane-spanning segments follow: residues 34-54 (LITI…LFDT), 315-335 (IASL…FPVI), 369-389 (FLLI…LIGL), 402-422 (VFFF…SAMF), 427-447 (TATV…IFLF), 460-477 (WIIA…RGLY), and 508-528 (CIML…DQII). Residues 586-823 (VLCNNLKKVY…YGGSYVLTVT (238 aa)) enclose the ABC transporter domain. 624-631 (GPNGAGKT) is a binding site for ATP.

Belongs to the ABC transporter superfamily. ABCA family. CPR flippase (TC 3.A.1.211) subfamily.

It localises to the membrane. The protein is ABC transporter A family member 8 (ABCA8) of Arabidopsis thaliana (Mouse-ear cress).